The sequence spans 263 residues: Phosphoinositide-3-kinase-interacting protein 1 (263 aa).

The first 21 residues, 1–21 (MLLAWVQAFLVSNMLLAEAYG), serve as a signal peptide directing secretion. The Extracellular portion of the chain corresponds to 22–168 (SGGCFWDNGH…NSKEKKDLGT (147 aa)). The 78-residue stretch at 24–101 (GCFWDNGHLY…EKRPCEDLRC (78 aa)) folds into the Kringle domain. Disulfide bonds link cysteine 25–cysteine 101, cysteine 46–cysteine 82, and cysteine 70–cysteine 96. Serine 39 carries an O-linked (GalNAc...) serine glycan. A glycan (N-linked (GlcNAc...) (complex) asparagine) is linked at asparagine 66. A helical membrane pass occupies residues 169–189 (LGYVLGITMMVIIIAIGAGII). The Cytoplasmic portion of the chain corresponds to 190–263 (LGYSYKRGKD…LMGQAGTPGA (74 aa)). Residues 242-251 (QTPVDPQEGT) are compositionally biased toward polar residues. Residues 242 to 263 (QTPVDPQEGTTPLMGQAGTPGA) are disordered.

In terms of processing, N- and O-glycosylated. O-glycosylated with core 1 or possibly core 8 glycans. N-glycan heterogeneity at Asn-66: dHex1Hex5HexNAc4 (major) and dHex1Hex6HexNAc5 (minor).

Its subcellular location is the cell membrane. Negative regulator of hepatic phosphatidylinositol 3-kinase (PI3K) activity. In Homo sapiens (Human), this protein is Phosphoinositide-3-kinase-interacting protein 1 (PIK3IP1).